A 423-amino-acid polypeptide reads, in one-letter code: Adenylosuccinate synthetase (423 aa).

GTP-binding positions include 12-18 and 40-42; these read GDEGKGK and GHT. Asp13 serves as the catalytic Proton acceptor. Asp13 and Gly40 together coordinate Mg(2+). Residues 13-16, 38-41, Thr128, Arg142, Gln223, Thr238, and Arg302 contribute to the IMP site; these read DEGK and NAGH. His41 acts as the Proton donor in catalysis. Position 298–304 (298–304) interacts with substrate; it reads TTTGRPR. GTP contacts are provided by residues Arg304, 330 to 332, and 412 to 414; these read RLD and CIG.

This sequence belongs to the adenylosuccinate synthetase family. Homodimer. Mg(2+) is required as a cofactor.

The protein resides in the cytoplasm. It carries out the reaction IMP + L-aspartate + GTP = N(6)-(1,2-dicarboxyethyl)-AMP + GDP + phosphate + 2 H(+). Its pathway is purine metabolism; AMP biosynthesis via de novo pathway; AMP from IMP: step 1/2. Functionally, plays an important role in the de novo pathway of purine nucleotide biosynthesis. Catalyzes the first committed step in the biosynthesis of AMP from IMP. The sequence is that of Adenylosuccinate synthetase from Dehalococcoides mccartyi (strain ATCC BAA-2266 / KCTC 15142 / 195) (Dehalococcoides ethenogenes (strain 195)).